Reading from the N-terminus, the 365-residue chain is Histidinol-phosphate aminotransferase (365 aa).

The residue at position 223 (lysine 223) is an N6-(pyridoxal phosphate)lysine.

The protein belongs to the class-II pyridoxal-phosphate-dependent aminotransferase family. Histidinol-phosphate aminotransferase subfamily. Homodimer. The cofactor is pyridoxal 5'-phosphate.

It carries out the reaction L-histidinol phosphate + 2-oxoglutarate = 3-(imidazol-4-yl)-2-oxopropyl phosphate + L-glutamate. Its pathway is amino-acid biosynthesis; L-histidine biosynthesis; L-histidine from 5-phospho-alpha-D-ribose 1-diphosphate: step 7/9. This is Histidinol-phosphate aminotransferase from Brucella melitensis biotype 1 (strain ATCC 23456 / CCUG 17765 / NCTC 10094 / 16M).